The sequence spans 205 residues: Small ribosomal subunit protein uS4 (205 aa).

A disordered region spans residues 18–46 (NIWGRPKSPVNSRAYGPGQHGQRRKSKVS). One can recognise an S4 RNA-binding domain in the interval 94–155 (SRLDAVVYRA…RSRNMALVLE (62 aa)).

This sequence belongs to the universal ribosomal protein uS4 family. Part of the 30S ribosomal subunit. Contacts protein S5. The interaction surface between S4 and S5 is involved in control of translational fidelity.

Functionally, one of the primary rRNA binding proteins, it binds directly to 16S rRNA where it nucleates assembly of the body of the 30S subunit. In terms of biological role, with S5 and S12 plays an important role in translational accuracy. This chain is Small ribosomal subunit protein uS4, found in Phenylobacterium zucineum (strain HLK1).